The sequence spans 452 residues: Ribosome biogenesis protein YTM1 (452 aa).

The tract at residues 17–98 (IVSQPVVFTT…EETLEIEYIE (82 aa)) is ubiquitin-like (UBL) domain. WD repeat units follow at residues 110 to 148 (PHEDWVSSVSCQLPRYFLTASYDGNLRAFDLSKNLTASI), 150 to 195 (AHPA…NPMA), and 208 to 247 (LHTAPVSSISANAAGTHVLTASWDGLIGYWDATVPSTDEV). Residues 245-269 (DEVPEPALNERDRSKKRRRVEEGEV) form a disordered region. Over residues 252–269 (LNERDRSKKRRRVEEGEV) the composition is skewed to basic and acidic residues. WD repeat units follow at residues 282–322 (SHTA…CSHT), 325–364 (ASEKPFLDMALTPDGNSALATSTDRSMTLYDLRSSTTILT), 371–411 (MHPS…SAMA), and 418–452 (GSGQKVLSVDWKRGIVGVGGERGLEMWKVGEEQKV).

It belongs to the WD repeat WDR12/YTM1 family. Component of the NOP7 complex, composed of ERB1, NOP7 and YTM1. The complex is held together by ERB1, which interacts with NOP7 via its N-terminal domain and with YTM1 via a high-affinity interaction between the seven-bladed beta-propeller domains of the 2 proteins. The NOP7 complex associates with the 66S pre-ribosome. Interacts (via UBL domain) with MDN1 (via VWFA/MIDAS domain).

It localises to the nucleus. It is found in the nucleolus. The protein localises to the nucleoplasm. Component of the NOP7 complex, which is required for maturation of the 25S and 5.8S ribosomal RNAs and formation of the 60S ribosome. This is Ribosome biogenesis protein YTM1 from Laccaria bicolor (strain S238N-H82 / ATCC MYA-4686) (Bicoloured deceiver).